The following is a 554-amino-acid chain: Glucose-6-phosphate isomerase (554 aa).

The Proton donor role is filled by glutamate 359. Active-site residues include histidine 390 and lysine 518.

Belongs to the GPI family.

The protein resides in the cytoplasm. It catalyses the reaction alpha-D-glucose 6-phosphate = beta-D-fructose 6-phosphate. The protein operates within carbohydrate biosynthesis; gluconeogenesis. It functions in the pathway carbohydrate degradation; glycolysis; D-glyceraldehyde 3-phosphate and glycerone phosphate from D-glucose: step 2/4. Catalyzes the reversible isomerization of glucose-6-phosphate to fructose-6-phosphate. The polypeptide is Glucose-6-phosphate isomerase (Pseudomonas entomophila (strain L48)).